The following is a 98-amino-acid chain: uncharacterized protein (98 aa).

2 helical membrane passes run 14–34 (FLVI…PVTA) and 41–61 (MTGA…ASII).

The protein resides in the cell membrane. This is an uncharacterized protein from Haemophilus influenzae (strain ATCC 51907 / DSM 11121 / KW20 / Rd).